The following is an 875-amino-acid chain: Alanine--tRNA ligase (875 aa).

4 residues coordinate Zn(2+): H564, H568, C666, and H670.

It belongs to the class-II aminoacyl-tRNA synthetase family. Homotetramer. It depends on Zn(2+) as a cofactor.

It localises to the cytoplasm. It catalyses the reaction tRNA(Ala) + L-alanine + ATP = L-alanyl-tRNA(Ala) + AMP + diphosphate. Its function is as follows. Catalyzes the attachment of alanine to tRNA(Ala) in a two-step reaction: alanine is first activated by ATP to form Ala-AMP and then transferred to the acceptor end of tRNA(Ala). Also edits incorrectly charged Ser-tRNA(Ala) and Gly-tRNA(Ala) via its editing domain. This chain is Alanine--tRNA ligase, found in Pectobacterium atrosepticum (strain SCRI 1043 / ATCC BAA-672) (Erwinia carotovora subsp. atroseptica).